A 274-amino-acid chain; its full sequence is 4-hydroxy-3-methylbut-2-enyl diphosphate reductase (274 aa).

C12 is a binding site for [4Fe-4S] cluster. (2E)-4-hydroxy-3-methylbut-2-enyl diphosphate is bound by residues H36 and H70. Positions 36 and 70 each coordinate dimethylallyl diphosphate. 2 residues coordinate isopentenyl diphosphate: H36 and H70. C92 is a binding site for [4Fe-4S] cluster. Residue H120 participates in (2E)-4-hydroxy-3-methylbut-2-enyl diphosphate binding. Residue H120 coordinates dimethylallyl diphosphate. H120 provides a ligand contact to isopentenyl diphosphate. Catalysis depends on E122, which acts as the Proton donor. T158 provides a ligand contact to (2E)-4-hydroxy-3-methylbut-2-enyl diphosphate. Residue C186 participates in [4Fe-4S] cluster binding. S214, S215, N216, and S258 together coordinate (2E)-4-hydroxy-3-methylbut-2-enyl diphosphate. Dimethylallyl diphosphate-binding residues include S214, S215, N216, and S258. Isopentenyl diphosphate is bound by residues S214, S215, N216, and S258.

This sequence belongs to the IspH family. [4Fe-4S] cluster serves as cofactor.

It carries out the reaction isopentenyl diphosphate + 2 oxidized [2Fe-2S]-[ferredoxin] + H2O = (2E)-4-hydroxy-3-methylbut-2-enyl diphosphate + 2 reduced [2Fe-2S]-[ferredoxin] + 2 H(+). The catalysed reaction is dimethylallyl diphosphate + 2 oxidized [2Fe-2S]-[ferredoxin] + H2O = (2E)-4-hydroxy-3-methylbut-2-enyl diphosphate + 2 reduced [2Fe-2S]-[ferredoxin] + 2 H(+). The protein operates within isoprenoid biosynthesis; dimethylallyl diphosphate biosynthesis; dimethylallyl diphosphate from (2E)-4-hydroxy-3-methylbutenyl diphosphate: step 1/1. It participates in isoprenoid biosynthesis; isopentenyl diphosphate biosynthesis via DXP pathway; isopentenyl diphosphate from 1-deoxy-D-xylulose 5-phosphate: step 6/6. Functionally, catalyzes the conversion of 1-hydroxy-2-methyl-2-(E)-butenyl 4-diphosphate (HMBPP) into a mixture of isopentenyl diphosphate (IPP) and dimethylallyl diphosphate (DMAPP). Acts in the terminal step of the DOXP/MEP pathway for isoprenoid precursor biosynthesis. The polypeptide is 4-hydroxy-3-methylbut-2-enyl diphosphate reductase (Helicobacter pylori (strain P12)).